Consider the following 100-residue polypeptide: Aspartyl/glutamyl-tRNA(Asn/Gln) amidotransferase subunit C (100 aa).

Belongs to the GatC family. Heterotrimer of A, B and C subunits.

It carries out the reaction L-glutamyl-tRNA(Gln) + L-glutamine + ATP + H2O = L-glutaminyl-tRNA(Gln) + L-glutamate + ADP + phosphate + H(+). The enzyme catalyses L-aspartyl-tRNA(Asn) + L-glutamine + ATP + H2O = L-asparaginyl-tRNA(Asn) + L-glutamate + ADP + phosphate + 2 H(+). Allows the formation of correctly charged Asn-tRNA(Asn) or Gln-tRNA(Gln) through the transamidation of misacylated Asp-tRNA(Asn) or Glu-tRNA(Gln) in organisms which lack either or both of asparaginyl-tRNA or glutaminyl-tRNA synthetases. The reaction takes place in the presence of glutamine and ATP through an activated phospho-Asp-tRNA(Asn) or phospho-Glu-tRNA(Gln). The protein is Aspartyl/glutamyl-tRNA(Asn/Gln) amidotransferase subunit C of Streptococcus equi subsp. zooepidemicus (strain MGCS10565).